Here is a 204-residue protein sequence, read N- to C-terminus: Prephenate decarboxylase (204 aa).

This sequence belongs to the prephenate decarboxylase family.

The protein resides in the cytoplasm. The catalysed reaction is prephenate + H(+) = 3-[(4R)-4-hydroxycyclohexa-1,5-dien-1-yl]-2-oxopropanoate + CO2. It participates in antibiotic biosynthesis; bacilysin biosynthesis. Its function is as follows. Part of the bacABCDEF operon responsible for the biosynthesis of the nonribosomally synthesized dipeptide antibiotic bacilysin, composed of L-alanine and L-anticapsin. Bacilysin is an irreversible inactivator of the glutaminase domain of glucosamine synthetase. BacA is an unusual prephenate decarboxylase that avoids the typical aromatization of the cyclohexadienol ring of prephenate. BacA catalyzes the protonation of prephenate (1-carboxy-4-hydroxy-alpha-oxo-2,5-cyclohexadiene-1-propanoic acid) at C6 position, followed by a decarboxylation to produce the endocyclic-delta(4),delta(8)-7R-dihydro-hydroxyphenylpyruvate (en-H2HPP). En-H2HPP is able to undergo a slow nonenzymatic isomerization to produce the exocyclic-delta(3),delta(5)-dihydro-hydroxyphenylpyruvate (ex-H2HPP). BacA isomerizes only the pro-R double bond in prephenate. The polypeptide is Prephenate decarboxylase (Bacillus subtilis).